The sequence spans 198 residues: Ribonuclease HII (198 aa).

In terms of domain architecture, RNase H type-2 spans 14-198 (GVIAGVDEVG…KNFAPISRAL (185 aa)). A divalent metal cation contacts are provided by Asp20, Glu21, and Asp112.

Belongs to the RNase HII family. The cofactor is Mn(2+). It depends on Mg(2+) as a cofactor.

Its subcellular location is the cytoplasm. It catalyses the reaction Endonucleolytic cleavage to 5'-phosphomonoester.. Functionally, endonuclease that specifically degrades the RNA of RNA-DNA hybrids. This is Ribonuclease HII from Wolbachia pipientis wMel.